The primary structure comprises 141 residues: Hemoglobin subunit alpha-1/2 (141 aa).

A Globin domain is found at 1 to 141 (VLSAABKSBV…VSTVLTSKYR (141 aa)). A Phosphoserine modification is found at serine 3. An N6-succinyllysine mark is found at lysine 7 and lysine 11. Lysine 16 bears the N6-acetyllysine; alternate mark. Position 16 is an N6-succinyllysine; alternate (lysine 16). At tyrosine 24 the chain carries Phosphotyrosine. Serine 35 carries the post-translational modification Phosphoserine. Lysine 40 carries the post-translational modification N6-succinyllysine. At serine 49 the chain carries Phosphoserine. Histidine 58 serves as a coordination point for O2. Residue histidine 87 participates in heme b binding. A Phosphoserine modification is found at serine 102. Threonine 108 carries the post-translational modification Phosphothreonine. Serine 124 carries the post-translational modification Phosphoserine. A phosphothreonine mark is found at threonine 134 and threonine 137. Serine 138 is modified (phosphoserine).

It belongs to the globin family. Heterotetramer of two alpha chains and two beta chains. As to expression, red blood cells.

Its function is as follows. Involved in oxygen transport from the lung to the various peripheral tissues. This is Hemoglobin subunit alpha-1/2 from Odocoileus virginianus virginianus (Virginia white-tailed deer).